The following is an 82-amino-acid chain: Large ribosomal subunit protein uL29 (82 aa).

The protein belongs to the universal ribosomal protein uL29 family.

In Trichodesmium erythraeum (strain IMS101), this protein is Large ribosomal subunit protein uL29.